We begin with the raw amino-acid sequence, 373 residues long: Probable G-protein coupled receptor 173 (373 aa).

Residues 1 to 26 lie on the Extracellular side of the membrane; sequence MANTTGEPEEVSGALSLPSASAYVKL. An N-linked (GlcNAc...) asparagine glycan is attached at asparagine 3. Residues 27 to 47 traverse the membrane as a helical segment; that stretch reads VLLGLIMCVSLAGNAILSLLV. Residues 48 to 59 lie on the Cytoplasmic side of the membrane; sequence LKERALHKAPYY. The helical transmembrane segment at 60–80 threads the bilayer; sequence FLLDLCLADGIRSAICFPFVL. Topologically, residues 81–97 are extracellular; it reads ASVRHGSSWTFSALSCK. A disulfide bridge links cysteine 96 with cysteine 174. A helical membrane pass occupies residues 98–118; the sequence is IVAFMAVLFCFHAAFMLFCIS. The Cytoplasmic segment spans residues 119 to 139; it reads VTRYMAIAHHRFYAKRMTLWT. Residues 140-160 traverse the membrane as a helical segment; that stretch reads CAAVICMAWTLSVAMAFPPVF. Residues 161–188 lie on the Extracellular side of the membrane; sequence DVGTYKFIREEDQCIFEHRYFKANDTLG. Asparagine 184 carries N-linked (GlcNAc...) asparagine glycosylation. Residues 189-209 form a helical membrane-spanning segment; sequence FMLMLAVLMAATHAVYGKLLL. Over 210 to 287 the chain is Cytoplasmic; the sequence is FEYRHRKMKP…VKGEKQLGRM (78 aa). A helical membrane pass occupies residues 288–308; that stretch reads FYAITLLFLLLWSPYIVACYW. Residues 309–322 lie on the Extracellular side of the membrane; sequence RVFVKACAVPHRYL. Residues 323-343 form a helical membrane-spanning segment; it reads ATAVWMSFAQAAVNPIVCFLL. At 344–373 the chain is on the cytoplasmic side; it reads NKDLKKCLRTHAPCWGTGGAPAPREPYCVM.

This sequence belongs to the G-protein coupled receptor 1 family. As to expression, expressed in the ovary, specifically in granulosa cells of follicles that have passed the primary stage and in oocytes (at protein level). Expressed in preadipocytes.

It localises to the cell membrane. Is a receptor for the SMIM20 derived peptides Phoenixin-14 and Phoenixin-20. It mediates the Phoenixin-14 and Phoenixin-20 augmentation of gonadotropin-releasing hormone (GNRH) signaling in the hypothalamus and pituitary gland. In the ovary, it mediates the effects of Phoenixin-14 and Phoenixin-20 induced granulosa cell proliferation during follicular growth. This Mus musculus (Mouse) protein is Probable G-protein coupled receptor 173 (Gpr173).